Reading from the N-terminus, the 902-residue chain is Nuclear factor of activated T-cells, cytoplasmic 4 (902 aa).

2 disordered regions span residues 16–180 and 208–369; these read VFGE…SSWS and RFGL…GGSR. A compositionally biased stretch (pro residues) spans 50–81; it reads EPPPYGAAPIGIPRPPPPRPGMHSPPPRPAPS. Over residues 96 to 109 the composition is skewed to gly residues; that stretch reads GGPGGGAGGAGGGR. The segment at 114-119 is calcineurin-binding; the sequence is PSIRIT. Residues 151–165 show a composition bias toward gly residues; it reads GFGGYREAGGQGGGA. The span at 166 to 180 shows a compositional bias: low complexity; sequence FFSPSPGSSSLSSWS. Phosphoserine; by MAPK7 and MAPK14 is present on residues serine 168 and serine 170. Phosphoserine; by MAPK8 and MAPK9 is present on residues serine 213 and serine 217. The SP 1 repeat unit spans residues 213 to 229; that stretch reads SPLPSPRASPRPWTPED. The 2 approximate SP repeats stretch occupies residues 213-293; it reads SPLPSPRASP…LSRRGSLGEE (81 aa). 2 stretches are compositionally biased toward pro residues: residues 215-227 and 254-263; these read LPSPRASPRPWTP and GPTPASPRPA. The short motif at 268-270 is the Nuclear localization signal element; that stretch reads KRR. Over residues 272-288 the composition is skewed to low complexity; that stretch reads SSSGTPSSASPALSRRG. The stretch at 277–293 is one SP 2; approximate repeat; that stretch reads PSSASPALSRRGSLGEE. A phosphoserine; by RPS6KA3 mark is found at serine 289 and serine 344. The RHD domain maps to 401–582; it reads SALPPLDWPL…VPIECSQRSA (182 aa). The DNA-binding element occupies 430–437; that stretch reads RAHYETEG. Residues 586–683 enclose the IPT/TIG domain; that stretch reads PQVEAYSPSA…KRSPTQSFRF (98 aa). A Nuclear localization signal motif is present at residues 672-674; it reads RRK. Lysine 689 participates in a covalent cross-link: Glycyl lysine isopeptide (Lys-Gly) (interchain with G-Cter in SUMO2). A disordered region spans residues 791–870; it reads PYGGRGSSFS…GGYSSGFRDS (80 aa). Residues 805–824 are compositionally biased toward pro residues; the sequence is FSPPAPFRPPPLPASPPLEG.

Member of the multicomponent NFATC transcription complex that consists of at least two components, a pre-existing cytoplasmic component NFATC2 and an inducible nuclear component NFATC1. Other NFAT proteins, such as NFATC3, or members of the activating protein-1 (AP-1) family and MAF can also bind the complex. NFAT proteins can bind DNA as monomers or dimers. Component of a promoter-binding complex composed of STAT3, NFATC3 and NFATC4; complex formation is enhanced by calcineurin. Interacts with CREBBP; this interaction potentiates transcription activation. Interacts with MAPK8/JNK1 and MAPK9/JNK2. Interacts with GATA4 (via the second Zn finger). Interacts (via N-terminus) with IRAK1 (via C-terminus). Interacts with RPS6KA3. Interacts with HOMER1, HOMER2 and HOMER3; this interaction competes with calcineurin/PPP3CA-binding and hence prevents NFATC4 dephosphorylation and activation. Interacts with ESR1 and ESR2; this interaction decreases NFATC4 transcriptional activity. Interacts with MTOR and MAPK7/ERK5. Interacts with TRIM17; this interaction prevents NFATC3 nuclear localization. Interacts with TCF25 (via C-terminus); the interaction leads to suppression of NFATC4 transcription factor activity and is reduced following stimulation with angiotensin-2. In terms of processing, phosphorylated by NFATC-kinases; dephosphorylated by calcineurin/PPP3CA. Phosphorylated on Ser-168 and Ser-170 by MTOR, IRAK1, MAPK7/ERK5 and MAPK14/p38, on Ser-213 and Ser-217 by MAPK8/JNK1 and MAPK9/JNK2, and on Ser-289 and Ser-344 by RPS6KA3. Phosphorylated by GSK3B. Phosphorylation by GSK3B markedly increases NFATC4 ubiquitination. Phosphorylation at Ser-168 and Ser-170 is stimulated by UV irradiation. Phosphorylation determines subcellular location: the hyperphosphorylated protein is cytosolic, while the dephosphorylated form is targeted to the nucleus. Post-translationally, ubiquitinated, leading to degradation by the proteasome. Ubiquitination may be stimulated by GSK3B-dependent phosphorylation. Polyubiquitin linkage mainly occurs through 'Lys-48'. Widely expressed, with high levels in placenta, lung, kidney, testis and ovary. Weakly expressed in spleen and thymus. In the hippocampus, expressed in the granular layer of the dentate gyrus, in the pyramidal neurons of CA3 region, and in the hippocampal fissure. Expressed in the heart (at protein level).

The protein localises to the cytoplasm. The protein resides in the nucleus. Transcriptional activity may be repressed by ESR1 and ESR2. Its function is as follows. Ca(2+)-regulated transcription factor that is involved in several processes, including the development and function of the immune, cardiovascular, musculoskeletal, and nervous systems. Involved in T-cell activation, stimulating the transcription of cytokine genes, including that of IL2 and IL4. Along with NFATC3, involved in embryonic heart development. Following JAK/STAT signaling activation and as part of a complex with NFATC3 and STAT3, binds to the alpha-beta E4 promoter region of CRYAB and activates transcription in cardiomyocytes. Involved in mitochondrial energy metabolism required for cardiac morphogenesis and function. Transactivates many genes involved in the cardiovascular system, including AGTR2, NPPB/BNP (in synergy with GATA4), NPPA/ANP/ANF and MYH7/beta-MHC. Involved in the regulation of adult hippocampal neurogenesis. Involved in BDNF-driven pro-survival signaling in hippocampal adult-born neurons. Involved in the formation of long-term spatial memory and long-term potentiation. In cochlear nucleus neurons, may play a role in deafferentation-induced apoptosis during the developmental critical period, when auditory neurons depend on afferent input for survival. Binds to and activates the BACE1/Beta-secretase 1 promoter, hence may regulate the proteolytic processing of the amyloid precursor protein (APP). Plays a role in adipocyte differentiation. May be involved in myoblast differentiation into myotubes. Binds the consensus DNA sequence 5'-GGAAAAT-3'. In the presence of CREBBP, activates TNF transcription. Binds to PPARG gene promoter and regulates its activity. Binds to PPARG and REG3G gene promoters. The sequence is that of Nuclear factor of activated T-cells, cytoplasmic 4 (NFATC4) from Homo sapiens (Human).